Consider the following 71-residue polypeptide: Small ribosomal subunit protein bS21 (71 aa).

Residues 38–71 (YEKPTTVRKRAKAAAQKRHAKKLSRENARRVRLY) are disordered. Over residues 43-59 (TVRKRAKAAAQKRHAKK) the composition is skewed to basic residues. The segment covering 60–71 (LSRENARRVRLY) has biased composition (basic and acidic residues).

The protein belongs to the bacterial ribosomal protein bS21 family.

This is Small ribosomal subunit protein bS21 from Aliivibrio fischeri (strain ATCC 700601 / ES114) (Vibrio fischeri).